Here is a 431-residue protein sequence, read N- to C-terminus: MQLNSNGWHVDDHIVVAVSTGIDSMCLLYQLLNDYKDSYRKLTCLHVNHGVRSASIEEARFLEAYCERHHIDLHIKKLDLSHSLNRNNSIQNEARIKRYEWFDEMMNVLEADVLLTAHHLDDQLETIMYRIFNGKSTRNKLGFDELSKRNGYQIYRPLLAVSKKEIKQFQERYHIPYFEDESNKDNKYVRNDIRNRIIPAIDENNQLKVSHLLKLKQWHDEQYDILQYSAKQFIQEFVKFDEQSKYLEVSRQAFNNLPNSLKMVVLDCLLSKYYELFNISAKTYEEWFKQFSSKKAQFSINLTDKWIIQIAYGKLIIMAKNNGDTYFRVQTIEKPGNYIFNKYRLEIHSNLPKCLFPLTVRTRQSGDTFKLNGRDGYKKVNRLFIDCKVQQWVRDQMPIVLDKQQRIIAVGDLYQQQTIKQWIIISKNGDE.

19–24 (STGIDS) is an ATP binding site.

The protein belongs to the tRNA(Ile)-lysidine synthase family.

It is found in the cytoplasm. The catalysed reaction is cytidine(34) in tRNA(Ile2) + L-lysine + ATP = lysidine(34) in tRNA(Ile2) + AMP + diphosphate + H(+). Ligates lysine onto the cytidine present at position 34 of the AUA codon-specific tRNA(Ile) that contains the anticodon CAU, in an ATP-dependent manner. Cytidine is converted to lysidine, thus changing the amino acid specificity of the tRNA from methionine to isoleucine. The protein is tRNA(Ile)-lysidine synthase of Staphylococcus aureus (strain MRSA252).